Here is a 236-residue protein sequence, read N- to C-terminus: Proliferating cell nuclear antigen (236 aa).

The DNA-binding element occupies 31–50 (RCDRNISMGMNLNNMAKMLK).

Belongs to the PCNA family.

The protein resides in the nucleus. This protein is an auxiliary protein of DNA polymerase delta and is involved in the control of eukaryotic DNA replication by increasing the polymerase's processibility during elongation of the leading strand. The chain is Proliferating cell nuclear antigen from Glycine max (Soybean).